A 230-amino-acid polypeptide reads, in one-letter code: Phosphoenolpyruvate guanylyltransferase (230 aa).

Positions 139, 155, and 158 each coordinate phosphoenolpyruvate.

The protein belongs to the CofC family.

The catalysed reaction is phosphoenolpyruvate + GTP + H(+) = enolpyruvoyl-2-diphospho-5'-guanosine + diphosphate. It functions in the pathway cofactor biosynthesis; coenzyme F420 biosynthesis. Guanylyltransferase that catalyzes the activation of phosphoenolpyruvate (PEP) as enolpyruvoyl-2-diphospho-5'-guanosine, via the condensation of PEP with GTP. It is involved in the biosynthesis of coenzyme F420, a hydride carrier cofactor. The sequence is that of Phosphoenolpyruvate guanylyltransferase from Thermobaculum terrenum (strain ATCC BAA-798 / CCMEE 7001 / YNP1).